The following is a 198-amino-acid chain: Ribonuclease HII (198 aa).

Positions 14 to 198 (HMIVGVDEAG…FAPVAQLQLV (185 aa)) constitute an RNase H type-2 domain. 3 residues coordinate a divalent metal cation: aspartate 20, glutamate 21, and aspartate 110.

The protein belongs to the RNase HII family. The cofactor is Mn(2+). Mg(2+) is required as a cofactor.

The protein resides in the cytoplasm. It carries out the reaction Endonucleolytic cleavage to 5'-phosphomonoester.. Functionally, endonuclease that specifically degrades the RNA of RNA-DNA hybrids. The chain is Ribonuclease HII from Sphingopyxis alaskensis (strain DSM 13593 / LMG 18877 / RB2256) (Sphingomonas alaskensis).